We begin with the raw amino-acid sequence, 124 residues long: Urease subunit beta (124 aa).

Belongs to the urease beta subunit family. Heterotrimer of UreA (gamma), UreB (beta) and UreC (alpha) subunits. Three heterotrimers associate to form the active enzyme.

It is found in the cytoplasm. It carries out the reaction urea + 2 H2O + H(+) = hydrogencarbonate + 2 NH4(+). It functions in the pathway nitrogen metabolism; urea degradation; CO(2) and NH(3) from urea (urease route): step 1/1. The sequence is that of Urease subunit beta from Bacillus velezensis (strain DSM 23117 / BGSC 10A6 / LMG 26770 / FZB42) (Bacillus amyloliquefaciens subsp. plantarum).